We begin with the raw amino-acid sequence, 134 residues long: Small ribosomal subunit protein uS11 (134 aa).

It belongs to the universal ribosomal protein uS11 family. In terms of assembly, part of the 30S ribosomal subunit. Interacts with proteins S7 and S18. Binds to IF-3.

Functionally, located on the platform of the 30S subunit, it bridges several disparate RNA helices of the 16S rRNA. Forms part of the Shine-Dalgarno cleft in the 70S ribosome. In Albidiferax ferrireducens (strain ATCC BAA-621 / DSM 15236 / T118) (Rhodoferax ferrireducens), this protein is Small ribosomal subunit protein uS11.